The chain runs to 361 residues: Protein-glutamate methylesterase/protein-glutamine glutaminase 1 (361 aa).

A Response regulatory domain is found at 10–127 (KVLVVDDSAL…REGIEEKAQE (118 aa)). Position 61 is a 4-aspartylphosphate (Asp-61). Residues 167–359 (FATTDKLIAV…ASVKRWYAEN (193 aa)) enclose the CheB-type methylesterase domain. Residues Ser-179, His-205, and Asp-301 contribute to the active site.

This sequence belongs to the CheB family. Phosphorylated by CheA. Phosphorylation of the N-terminal regulatory domain activates the methylesterase activity.

The protein resides in the cytoplasm. It catalyses the reaction [protein]-L-glutamate 5-O-methyl ester + H2O = L-glutamyl-[protein] + methanol + H(+). The enzyme catalyses L-glutaminyl-[protein] + H2O = L-glutamyl-[protein] + NH4(+). Its function is as follows. Involved in chemotaxis. Part of a chemotaxis signal transduction system that modulates chemotaxis in response to various stimuli. Catalyzes the demethylation of specific methylglutamate residues introduced into the chemoreceptors (methyl-accepting chemotaxis proteins or MCP) by CheR. Also mediates the irreversible deamidation of specific glutamine residues to glutamic acid. The polypeptide is Protein-glutamate methylesterase/protein-glutamine glutaminase 1 (Hahella chejuensis (strain KCTC 2396)).